We begin with the raw amino-acid sequence, 202 residues long: Orotate phosphoribosyltransferase (202 aa).

5-phospho-alpha-D-ribose 1-diphosphate-binding positions include Arg-94, Lys-98, His-100, and 120-128; that span reads EDLISTGGS. Ser-124 lines the orotate pocket.

Belongs to the purine/pyrimidine phosphoribosyltransferase family. PyrE subfamily. Homodimer. The cofactor is Mg(2+).

The catalysed reaction is orotidine 5'-phosphate + diphosphate = orotate + 5-phospho-alpha-D-ribose 1-diphosphate. It functions in the pathway pyrimidine metabolism; UMP biosynthesis via de novo pathway; UMP from orotate: step 1/2. In terms of biological role, catalyzes the transfer of a ribosyl phosphate group from 5-phosphoribose 1-diphosphate to orotate, leading to the formation of orotidine monophosphate (OMP). The protein is Orotate phosphoribosyltransferase of Oceanobacillus iheyensis (strain DSM 14371 / CIP 107618 / JCM 11309 / KCTC 3954 / HTE831).